Reading from the N-terminus, the 62-residue chain is Photosystem II reaction center protein Z (62 aa).

Helical transmembrane passes span 8-28 (AVFALIATSLILLISVPVVFA) and 41-61 (FSGTSLWIGLVFLVGILNSLI).

The protein belongs to the PsbZ family. In terms of assembly, PSII is composed of 1 copy each of membrane proteins PsbA, PsbB, PsbC, PsbD, PsbE, PsbF, PsbH, PsbI, PsbJ, PsbK, PsbL, PsbM, PsbT, PsbY, PsbZ, Psb30/Ycf12, at least 3 peripheral proteins of the oxygen-evolving complex and a large number of cofactors. It forms dimeric complexes.

It localises to the plastid. The protein localises to the chloroplast thylakoid membrane. Functionally, may control the interaction of photosystem II (PSII) cores with the light-harvesting antenna, regulates electron flow through the 2 photosystem reaction centers. PSII is a light-driven water plastoquinone oxidoreductase, using light energy to abstract electrons from H(2)O, generating a proton gradient subsequently used for ATP formation. This Nicotiana sylvestris (Wood tobacco) protein is Photosystem II reaction center protein Z.